A 325-amino-acid polypeptide reads, in one-letter code: Tyrosine phosphatase H2 (325 aa).

Positions V27–Y295 constitute a Tyrosine-protein phosphatase domain. C236 (phosphocysteine intermediate) is an active-site residue.

It belongs to the protein-tyrosine phosphatase family.

The protein localises to the host cytoplasm. The enzyme catalyses O-phospho-L-tyrosyl-[protein] + H2O = L-tyrosyl-[protein] + phosphate. Functionally, suppresses host immune cell adhesion and phagocytosis. Triggers host mitochondrial membrane depolarization and caspase-dependent apoptosis. This is Tyrosine phosphatase H2 (H2) from Microplitis demolitor bracovirus (isolate Webb) (MdBV).